Consider the following 639-residue polypeptide: Extracellular metalloproteinase 9 (639 aa).

The N-terminal stretch at M1–G19 is a signal peptide. A propeptide spanning residues H20–D250 is cleaved from the precursor. A glycan (N-linked (GlcNAc...) asparagine) is linked at N278. The interval P293 to Y312 is disordered. Position 434 (H434) interacts with Zn(2+). Residue E435 is part of the active site. Position 438 (H438) interacts with Zn(2+).

This sequence belongs to the peptidase M36 family. Zn(2+) is required as a cofactor.

It is found in the secreted. Its function is as follows. Secreted metalloproteinase that allows assimilation of proteinaceous substrates and probably acts as a virulence factor. In Coccidioides posadasii (strain C735) (Valley fever fungus), this protein is Extracellular metalloproteinase 9 (MEP9).